The sequence spans 78 residues: Alpha-amylase inhibitor Haim-1 (78 aa).

2 disulfide bridges follow: C11–C27 and C45–C72.

Inhibits mammalian alpha-amylases specifically but has no action on plant and microbial alpha-amylases. This chain is Alpha-amylase inhibitor Haim-1, found in Streptomyces griseosporeus.